Consider the following 375-residue polypeptide: 23S rRNA (uracil(747)-C(5))-methyltransferase RlmC (375 aa).

Cysteine 3, cysteine 11, cysteine 14, and cysteine 87 together coordinate [4Fe-4S] cluster. Residues glutamine 212, phenylalanine 241, glutamate 262, and asparagine 307 each coordinate S-adenosyl-L-methionine. Cysteine 334 functions as the Nucleophile in the catalytic mechanism.

It belongs to the class I-like SAM-binding methyltransferase superfamily. RNA M5U methyltransferase family. RlmC subfamily.

The enzyme catalyses uridine(747) in 23S rRNA + S-adenosyl-L-methionine = 5-methyluridine(747) in 23S rRNA + S-adenosyl-L-homocysteine + H(+). In terms of biological role, catalyzes the formation of 5-methyl-uridine at position 747 (m5U747) in 23S rRNA. This is 23S rRNA (uracil(747)-C(5))-methyltransferase RlmC from Yersinia enterocolitica serotype O:8 / biotype 1B (strain NCTC 13174 / 8081).